We begin with the raw amino-acid sequence, 831 residues long: uncharacterized protein (831 aa).

The disordered stretch occupies residues 285-311 (ALNLKRQQLKEEQKEQQSTGDRSDVST). 470–477 (GDTGNGKS) is an ATP binding site.

This is an uncharacterized protein from Bacillus subtilis (strain 168).